Consider the following 357-residue polypeptide: UDP-N-acetylglucosamine--N-acetylmuramyl-(pentapeptide) pyrophosphoryl-undecaprenol N-acetylglucosamine transferase (357 aa).

Residues 12-14 (TGG), N124, R162, S190, I243, 262-267 (ALTVAE), and Q288 contribute to the UDP-N-acetyl-alpha-D-glucosamine site.

This sequence belongs to the glycosyltransferase 28 family. MurG subfamily.

The protein resides in the cell inner membrane. It catalyses the reaction di-trans,octa-cis-undecaprenyl diphospho-N-acetyl-alpha-D-muramoyl-L-alanyl-D-glutamyl-meso-2,6-diaminopimeloyl-D-alanyl-D-alanine + UDP-N-acetyl-alpha-D-glucosamine = di-trans,octa-cis-undecaprenyl diphospho-[N-acetyl-alpha-D-glucosaminyl-(1-&gt;4)]-N-acetyl-alpha-D-muramoyl-L-alanyl-D-glutamyl-meso-2,6-diaminopimeloyl-D-alanyl-D-alanine + UDP + H(+). It participates in cell wall biogenesis; peptidoglycan biosynthesis. Functionally, cell wall formation. Catalyzes the transfer of a GlcNAc subunit on undecaprenyl-pyrophosphoryl-MurNAc-pentapeptide (lipid intermediate I) to form undecaprenyl-pyrophosphoryl-MurNAc-(pentapeptide)GlcNAc (lipid intermediate II). This Alcanivorax borkumensis (strain ATCC 700651 / DSM 11573 / NCIMB 13689 / SK2) protein is UDP-N-acetylglucosamine--N-acetylmuramyl-(pentapeptide) pyrophosphoryl-undecaprenol N-acetylglucosamine transferase.